Here is a 516-residue protein sequence, read N- to C-terminus: uncharacterized protein (516 aa).

S21 is modified (phosphoserine). The interval 46-74 is disordered; sequence DLQSSMEDSNKANGNGEETTDGAEGVLQT. Residues 47–62 show a composition bias toward polar residues; the sequence is LQSSMEDSNKANGNGE. 6 WD repeats span residues 182 to 227, 252 to 292, 295 to 335, 337 to 377, 381 to 421, and 426 to 468; these read TFPL…AVYP, YHTD…CVKS, YHSD…APSS, QVTS…KSVW, AHDG…PKMV, and LDVG…GVRK. Residues 482–493 are compositionally biased toward basic and acidic residues; it reads ERIVQLEDRGAG. Residues 482–516 are disordered; the sequence is ERIVQLEDRGAGEDSSDDDDYEDIEDDDDQDAEMS. Positions 495 to 516 are enriched in acidic residues; sequence DSSDDDDYEDIEDDDDQDAEMS. 2 positions are modified to phosphoserine: S496 and S497.

The protein resides in the cytoplasm. Its subcellular location is the nucleus. It is found in the nucleolus. This is an uncharacterized protein from Schizosaccharomyces pombe (strain 972 / ATCC 24843) (Fission yeast).